Here is a 462-residue protein sequence, read N- to C-terminus: Glycine--tRNA ligase (462 aa).

Residues arginine 100 and glutamate 175 each contribute to the substrate site. ATP-binding positions include 207–209 (RNE), 217–222 (FRTREF), 291–292 (EL), and 335–338 (GADR). Substrate is bound at residue 222–226 (FEQME). 331-335 (EPSLG) provides a ligand contact to substrate.

The protein belongs to the class-II aminoacyl-tRNA synthetase family. As to quaternary structure, homodimer.

Its subcellular location is the cytoplasm. It carries out the reaction tRNA(Gly) + glycine + ATP = glycyl-tRNA(Gly) + AMP + diphosphate. Functionally, catalyzes the attachment of glycine to tRNA(Gly). The polypeptide is Glycine--tRNA ligase (Clostridium acetobutylicum (strain ATCC 824 / DSM 792 / JCM 1419 / IAM 19013 / LMG 5710 / NBRC 13948 / NRRL B-527 / VKM B-1787 / 2291 / W)).